The following is a 294-amino-acid chain: Putative pyruvate, phosphate dikinase regulatory protein (294 aa).

156-163 (GVSRSGKT) contributes to the ADP binding site.

It belongs to the pyruvate, phosphate/water dikinase regulatory protein family. PDRP subfamily.

It catalyses the reaction N(tele)-phospho-L-histidyl/L-threonyl-[pyruvate, phosphate dikinase] + ADP = N(tele)-phospho-L-histidyl/O-phospho-L-threonyl-[pyruvate, phosphate dikinase] + AMP + H(+). It carries out the reaction N(tele)-phospho-L-histidyl/O-phospho-L-threonyl-[pyruvate, phosphate dikinase] + phosphate + H(+) = N(tele)-phospho-L-histidyl/L-threonyl-[pyruvate, phosphate dikinase] + diphosphate. Its function is as follows. Bifunctional serine/threonine kinase and phosphorylase involved in the regulation of the pyruvate, phosphate dikinase (PPDK) by catalyzing its phosphorylation/dephosphorylation. The sequence is that of Putative pyruvate, phosphate dikinase regulatory protein from Cutibacterium acnes (strain DSM 16379 / KPA171202) (Propionibacterium acnes).